Here is a 383-residue protein sequence, read N- to C-terminus: ATP phosphoribosyltransferase regulatory subunit (383 aa).

Belongs to the class-II aminoacyl-tRNA synthetase family. HisZ subfamily. As to quaternary structure, heteromultimer composed of HisG and HisZ subunits.

The protein resides in the cytoplasm. It functions in the pathway amino-acid biosynthesis; L-histidine biosynthesis; L-histidine from 5-phospho-alpha-D-ribose 1-diphosphate: step 1/9. Required for the first step of histidine biosynthesis. May allow the feedback regulation of ATP phosphoribosyltransferase activity by histidine. The sequence is that of ATP phosphoribosyltransferase regulatory subunit from Desulfitobacterium hafniense (strain Y51).